Consider the following 258-residue polypeptide: Imidazole glycerol phosphate synthase subunit HisF (258 aa).

Residues Asp-11 and Asp-130 contribute to the active site.

The protein belongs to the HisA/HisF family. Heterodimer of HisH and HisF.

The protein localises to the cytoplasm. It catalyses the reaction 5-[(5-phospho-1-deoxy-D-ribulos-1-ylimino)methylamino]-1-(5-phospho-beta-D-ribosyl)imidazole-4-carboxamide + L-glutamine = D-erythro-1-(imidazol-4-yl)glycerol 3-phosphate + 5-amino-1-(5-phospho-beta-D-ribosyl)imidazole-4-carboxamide + L-glutamate + H(+). The protein operates within amino-acid biosynthesis; L-histidine biosynthesis; L-histidine from 5-phospho-alpha-D-ribose 1-diphosphate: step 5/9. IGPS catalyzes the conversion of PRFAR and glutamine to IGP, AICAR and glutamate. The HisF subunit catalyzes the cyclization activity that produces IGP and AICAR from PRFAR using the ammonia provided by the HisH subunit. This Escherichia coli O17:K52:H18 (strain UMN026 / ExPEC) protein is Imidazole glycerol phosphate synthase subunit HisF.